A 339-amino-acid polypeptide reads, in one-letter code: Methylthioribose-1-phosphate isomerase (339 aa).

Residues 52 to 54, R89, and Q188 contribute to the substrate site; that span reads RGA. D229 (proton donor) is an active-site residue. Residue 239–240 coordinates substrate; the sequence is NK.

Belongs to the eIF-2B alpha/beta/delta subunits family. MtnA subfamily.

The catalysed reaction is 5-(methylsulfanyl)-alpha-D-ribose 1-phosphate = 5-(methylsulfanyl)-D-ribulose 1-phosphate. It functions in the pathway amino-acid biosynthesis; L-methionine biosynthesis via salvage pathway; L-methionine from S-methyl-5-thio-alpha-D-ribose 1-phosphate: step 1/6. Its function is as follows. Catalyzes the interconversion of methylthioribose-1-phosphate (MTR-1-P) into methylthioribulose-1-phosphate (MTRu-1-P). In Anaeromyxobacter dehalogenans (strain 2CP-C), this protein is Methylthioribose-1-phosphate isomerase.